Consider the following 88-residue polypeptide: Small ribosomal subunit protein uS15 (88 aa).

The protein belongs to the universal ribosomal protein uS15 family. In terms of assembly, part of the 30S ribosomal subunit. Forms a bridge to the 50S subunit in the 70S ribosome, contacting the 23S rRNA.

One of the primary rRNA binding proteins, it binds directly to 16S rRNA where it helps nucleate assembly of the platform of the 30S subunit by binding and bridging several RNA helices of the 16S rRNA. Functionally, forms an intersubunit bridge (bridge B4) with the 23S rRNA of the 50S subunit in the ribosome. The chain is Small ribosomal subunit protein uS15 from Pelobacter propionicus (strain DSM 2379 / NBRC 103807 / OttBd1).